Reading from the N-terminus, the 354-residue chain is Biotin synthase (354 aa).

In terms of domain architecture, Radical SAM core spans 40–258 (NEVQVSTLLS…IAVARILMPR (219 aa)). [4Fe-4S] cluster-binding residues include C55, C59, and C62. [2Fe-2S] cluster-binding residues include C99, C130, C190, and R262.

This sequence belongs to the radical SAM superfamily. Biotin synthase family. Homodimer. The cofactor is [4Fe-4S] cluster. [2Fe-2S] cluster is required as a cofactor.

It catalyses the reaction (4R,5S)-dethiobiotin + (sulfur carrier)-SH + 2 reduced [2Fe-2S]-[ferredoxin] + 2 S-adenosyl-L-methionine = (sulfur carrier)-H + biotin + 2 5'-deoxyadenosine + 2 L-methionine + 2 oxidized [2Fe-2S]-[ferredoxin]. It functions in the pathway cofactor biosynthesis; biotin biosynthesis; biotin from 7,8-diaminononanoate: step 2/2. In terms of biological role, catalyzes the conversion of dethiobiotin (DTB) to biotin by the insertion of a sulfur atom into dethiobiotin via a radical-based mechanism. In Hahella chejuensis (strain KCTC 2396), this protein is Biotin synthase.